Here is a 428-residue protein sequence, read N- to C-terminus: 3-phosphoshikimate 1-carboxyvinyltransferase (428 aa).

The 3-phosphoshikimate site is built by lysine 19, serine 20, and arginine 24. Lysine 19 provides a ligand contact to phosphoenolpyruvate. 2 residues coordinate phosphoenolpyruvate: glycine 91 and arginine 119. 3-phosphoshikimate is bound by residues serine 164, glutamine 166, aspartate 312, and lysine 339. Position 166 (glutamine 166) interacts with phosphoenolpyruvate. Aspartate 312 serves as the catalytic Proton acceptor. 2 residues coordinate phosphoenolpyruvate: arginine 343 and arginine 386.

It belongs to the EPSP synthase family. In terms of assembly, monomer.

It localises to the cytoplasm. The enzyme catalyses 3-phosphoshikimate + phosphoenolpyruvate = 5-O-(1-carboxyvinyl)-3-phosphoshikimate + phosphate. It participates in metabolic intermediate biosynthesis; chorismate biosynthesis; chorismate from D-erythrose 4-phosphate and phosphoenolpyruvate: step 6/7. Catalyzes the transfer of the enolpyruvyl moiety of phosphoenolpyruvate (PEP) to the 5-hydroxyl of shikimate-3-phosphate (S3P) to produce enolpyruvyl shikimate-3-phosphate and inorganic phosphate. The polypeptide is 3-phosphoshikimate 1-carboxyvinyltransferase (Bacillus velezensis (strain DSM 23117 / BGSC 10A6 / LMG 26770 / FZB42) (Bacillus amyloliquefaciens subsp. plantarum)).